We begin with the raw amino-acid sequence, 170 residues long: Urease accessory protein UreE (170 aa).

It belongs to the UreE family.

The protein resides in the cytoplasm. In terms of biological role, involved in urease metallocenter assembly. Binds nickel. Probably functions as a nickel donor during metallocenter assembly. The sequence is that of Urease accessory protein UreE from Helicobacter acinonychis (strain Sheeba).